A 402-amino-acid chain; its full sequence is CD2 homolog (402 aa).

A signal peptide spans 1-16 (MIIIVIFLMCLKIVLN). Over 17–204 (NIIIWSTLNQ…ILKYQNYLST (188 aa)) the chain is Extracellular. Asparagine 25, asparagine 37, asparagine 52, asparagine 55, asparagine 72, asparagine 77, asparagine 81, asparagine 89, asparagine 95, asparagine 108, asparagine 125, asparagine 137, asparagine 148, asparagine 153, asparagine 169, asparagine 177, asparagine 184, and asparagine 190 each carry an N-linked (GlcNAc...) asparagine; by host glycan. 2 cysteine pairs are disulfide-bonded: cysteine 126–cysteine 191 and cysteine 133–cysteine 174. A helical transmembrane segment spans residues 205 to 225 (LFYIIIFIVSGLIIGIFISII). Residues 226–402 (SVLSIRRKRK…ISLIHVDRII (177 aa)) are Cytoplasmic-facing. The segment at 238–276 (VEEIESPPPSESNEEDISHDDTTSIHEPSPREPLLPKPY) is disordered. A compositionally biased stretch (basic and acidic residues) spans 256-267 (HDDTTSIHEPSP). A run of 11 repeats spans residues 302–307 (KPCPPP), 308–313 (KPCPPP), 314–319 (KPCPPP), 320–325 (KPCPPP), 326–331 (KPCSPP), 332–337 (KPCRPP), 338–343 (KPCPPP), 344–349 (KPCPPP), 350–355 (KPCPPP), 356–361 (KPCPPS), and 362–367 (KPCPSP). The tract at residues 302-367 (KPCPPPKPCP…CPPSKPCPSP (66 aa)) is 11 X 6 AA tandem repeats of K-P-C-[PRS]-[P]-[PS]. Over residues 319–386 (PKPCPPPKPC…PSIPLLPNIP (68 aa)) the composition is skewed to pro residues. The tract at residues 319–388 (PKPCPPPKPC…IPLLPNIPPL (70 aa)) is disordered.

It belongs to the asfivirus CD2 homolog protein family. As to quaternary structure, both glycosylated and nonglycosylated forms interact (via C-terminus) with the host AP-1 complex. In terms of processing, cleaved into two fragments of 63 kDa and 26 kDa containing respectively the glycosylated N-terminus and the nonglycosylated C-terminus. A full-length 89-kDa glycosylated form also exists.

The protein resides in the host cell membrane. The protein localises to the virion membrane. It localises to the host Golgi apparatus. Its function is as follows. May play an immunosuppressive role by inhibiting lymphocyte proliferation and subsequently facilitating viral replication and generalization of infection. Responsible for viral hemadsorption, which may help viral spread. Increases virus replication in the tick vector at the step of virus uptake or replication in the tick gut. May play a role in the host Golgi reorganization to yield viral factories. May play a role in host cell penetration. The polypeptide is CD2 homolog (Ornithodoros (relapsing fever ticks)).